Reading from the N-terminus, the 1323-residue chain is Regulatory protein ADR1 (1323 aa).

Ser-54 is modified (phosphoserine). 2 consecutive C2H2-type zinc fingers follow at residues 104-126 (FVCE…YRSH) and 132-155 (YPCG…QKIH). Residues 175–216 (KARKNSASSVKFQTPTYGTPDNGNFLNRTTANTRRKASPEAN) form a disordered region. Residues 179 to 206 (NSASSVKFQTPTYGTPDNGNFLNRTTAN) show a composition bias toward polar residues. Thr-188 and Thr-193 each carry phosphothreonine. Ser-230 bears the Phosphoserine; by PKA; in vitro mark. At Ser-258 the chain carries Phosphoserine. A Phosphothreonine modification is found at Thr-259. Residues Ser-299, Ser-323, and Ser-325 each carry the phosphoserine modification. Thr-327 carries the post-translational modification Phosphothreonine.

In terms of processing, phosphorylation at Ser-230 by cAMP-dependent protein kinase A does not affect DNA binding but appears to prevent transcription of ADH2 during glucose repression.

The protein localises to the nucleus. In terms of biological role, required for transcriptional activation of glucose-repressible alcohol dehydrogenase (ADH2). The sequence is that of Regulatory protein ADR1 (ADR1) from Saccharomyces cerevisiae (strain ATCC 204508 / S288c) (Baker's yeast).